The following is a 509-amino-acid chain: ATP synthase subunit alpha (509 aa).

169-176 (GDRQTGKT) lines the ATP pocket.

The protein belongs to the ATPase alpha/beta chains family. In terms of assembly, F-type ATPases have 2 components, CF(1) - the catalytic core - and CF(0) - the membrane proton channel. CF(1) has five subunits: alpha(3), beta(3), gamma(1), delta(1), epsilon(1). CF(0) has three main subunits: a(1), b(2) and c(9-12). The alpha and beta chains form an alternating ring which encloses part of the gamma chain. CF(1) is attached to CF(0) by a central stalk formed by the gamma and epsilon chains, while a peripheral stalk is formed by the delta and b chains.

It is found in the cell inner membrane. The catalysed reaction is ATP + H2O + 4 H(+)(in) = ADP + phosphate + 5 H(+)(out). Functionally, produces ATP from ADP in the presence of a proton gradient across the membrane. The alpha chain is a regulatory subunit. The protein is ATP synthase subunit alpha of Chelativorans sp. (strain BNC1).